The following is a 351-amino-acid chain: Calcium uniporter protein, mitochondrial (351 aa).

A mitochondrion-targeting transit peptide spans 1-50 (MAAAAGRSLLLLLSSRGGGGGGAGGCGALTAGCFPGLGVSRHRQQQHHRT). Residues 51–233 (VHQRIASWQN…ISRKAEKRTT (183 aa)) lie on the Mitochondrial matrix side of the membrane. 2 positions are modified to phosphoserine; by CaMK2: serine 57 and serine 92. Positions 75–165 (VTVVYQNGLP…LTYHVRPPKR (91 aa)) are N-terminal MCU domain. Cysteine 97 bears the S-glutathionyl cysteine mark. A coiled-coil region spans residues 192–223 (IEQHQLNKERELIERLEDLKEQLAPLEKVRIE). Residues 234–255 (LVLWGGLAYMATQFGILARLTW) form a helical membrane-spanning segment. The Mitochondrial intermembrane segment spans residues 256 to 262 (WEYSWDI). Positions 260 to 268 (WDIMEPVTY) match the Selectivity filter motif. Residues 263–284 (MEPVTYFITYGSAMAMYAYFVM) form a helical membrane-spanning segment. Glutamate 264 contacts Ca(2+). Residues 285–290 (TRQEYV) are juxtamembrane helix. The Mitochondrial matrix portion of the chain corresponds to 285–351 (TRQEYVYPEA…LPLRQIGEKD (67 aa)). Residues 311–339 (RFDLEKYNQLKDAIAQAEMDLKRLRDPLQ) adopt a coiled-coil conformation. Lysine 332 is subject to N6-acetyllysine.

Belongs to the MCU (TC 1.A.77) family. As to quaternary structure, homotetramer. Component of the uniplex complex, composed of MCU, EMRE/SMDT1, MICU1 and MICU2 (or MICU3) in a 4:4:1:1 stoichiometry. Interacts with CCDC109B/MCUB; this inhibits channel activity. Interacts with MCUR1. Interactions with MICU1 and MCUR1 are mutually exclusive. Interacts with SLC25A23. In terms of processing, phosphorylation by CaMK2 in heart leads to increased MCU current. The regulation of MCU by CaMK2 is however subject to discussion: another group was unable to reproduce these results. Phosphorylated on tyrosines by PTK2B/PYK2, promoting oligomerization. Glutathionylation at Cys-97 in response to reactive oxygen species (ROS) promotes MCU higher-order assembly, leading to constitutive activation of the MCU channel and mitochondrial calcium overload. Post-translationally, undergoes proteolytic degradation by SPG7.

The protein localises to the mitochondrion inner membrane. It carries out the reaction Ca(2+)(in) = Ca(2+)(out). MCU channel activity is regulated by the heterodimer composed of MICU1 and either MICU2 or MICU3, which act as calcium-sensors. At low calcium levels, MICU1 occludes the pore of the MCU channel, preventing mitochondrial calcium uptake. At higher calcium levels, calcium-binding to MICU1 and MICU2 (or MICU3) induces a conformational change that weakens MCU-MICU1 interactions and moves the MICU1-MICU2 heterodimer away from the pore, allowing calcium permeation through the channel. MCU channel activity is gated by EMRE/SMDT1 via the juxtamembrane helix loop. Inhibited by ruthenium red or its derivative Ru360. Functionally, channel-forming and calcium-conducting subunit of the mitochondrial inner membrane calcium uniporter complex (uniplex), which mediates calcium uptake into the mitochondrial matrix. MCU channel activity is regulated by the calcium-sensor subunits of the uniplex MICU1 and MICU2 (or MICU3). Mitochondrial calcium homeostasis plays key roles in cellular physiology and regulates ATP production, cytoplasmic calcium signals and activation of cell death pathways. Involved in buffering the amplitude of systolic calcium rises in cardiomyocytes. While dispensable for baseline homeostatic cardiac function, acts as a key regulator of short-term mitochondrial calcium loading underlying a 'fight-or-flight' response during acute stress: acts by mediating a rapid increase of mitochondrial calcium in pacemaker cells. Participates in mitochondrial permeability transition during ischemia-reperfusion injury. Mitochondrial calcium uptake in skeletal muscle cells is involved in muscle size in adults. Regulates synaptic vesicle endocytosis kinetics in central nerve terminal. Regulates glucose-dependent insulin secretion in pancreatic beta-cells by regulating mitochondrial calcium uptake. Involved in antigen processing and presentation. The chain is Calcium uniporter protein, mitochondrial from Homo sapiens (Human).